A 618-amino-acid polypeptide reads, in one-letter code: Phosphoenolpyruvate carboxykinase [GTP] (618 aa).

Residues R83 and 217–219 each bind substrate; that span reads YGG. Residues K226 and H245 each contribute to the Mn(2+) site. S267 is a substrate binding site. 268 to 273 contacts GTP; sequence MCGKTS. The active site involves C269. Residue D286 participates in Mn(2+) binding. 381–383 serves as a coordination point for substrate; sequence NAR. Residues R383 and R415 each coordinate GTP.

The protein belongs to the phosphoenolpyruvate carboxykinase [GTP] family. It depends on Mn(2+) as a cofactor.

It is found in the cytoplasm. It catalyses the reaction oxaloacetate + GTP = phosphoenolpyruvate + GDP + CO2. It participates in carbohydrate biosynthesis; gluconeogenesis. Functionally, catalyzes the conversion of oxaloacetate (OAA) to phosphoenolpyruvate (PEP), the rate-limiting step in the metabolic pathway that produces glucose from lactate and other precursors derived from the citric acid cycle. In Pyrococcus abyssi (strain GE5 / Orsay), this protein is Phosphoenolpyruvate carboxykinase [GTP].